The following is a 131-amino-acid chain: MRHYEIVFMVHPDQSEQVPGMIERYTGAITEANGKIHRLEDWGRRQLAYPIQDLHKAHYVLMNVEAPAETIEELETAFRFNDAVLRNMVMRTKGAITEASPMAKAKDERDSRRGPAGDRSYDEANAEEIAE.

The tract at residues Ile96 to Glu131 is disordered. Residues Lys104 to Asp122 show a composition bias toward basic and acidic residues.

This sequence belongs to the bacterial ribosomal protein bS6 family.

Binds together with bS18 to 16S ribosomal RNA. In Shewanella oneidensis (strain ATCC 700550 / JCM 31522 / CIP 106686 / LMG 19005 / NCIMB 14063 / MR-1), this protein is Small ribosomal subunit protein bS6.